Consider the following 154-residue polypeptide: Homeobox protein engrailed (154 aa).

Residues 37–96 (EKRPRTAFSASQLQRLKQEFQQSNYLTEQRRRSLAKELTLSESQIKIWFQNKRAKIKKAS) constitute a DNA-binding region (homeobox). The segment at 127-154 (KLLNGQNTSGDCSRSDYTSDSDGDSLTH) is disordered. Residues 129–144 (LNGQNTSGDCSRSDYT) show a composition bias toward polar residues. Positions 145 to 154 (SDSDGDSLTH) are enriched in acidic residues.

The protein belongs to the engrailed homeobox family.

The protein resides in the nucleus. This Tripneustes gratilla (Hawaian sea urchin) protein is Homeobox protein engrailed (EN).